Consider the following 149-residue polypeptide: Probable calcium-binding protein CML25/26 (149 aa).

4 consecutive EF-hand domains span residues 1–35 (MASS…ALGE), 37–72 (VSEE…HQLQ), 77–113 (ESLR…LGSE), and 117–149 (LEME…MLMA). The Ca(2+) site is built by D13, D15, D17, K19, E24, D50, D52, D54, and E61. Residues D130, N132, D134, and E141 each coordinate Ca(2+).

Functionally, potential calcium sensor. In Oryza sativa subsp. japonica (Rice), this protein is Probable calcium-binding protein CML25/26 (CML25).